The following is a 166-amino-acid chain: UPF0336 protein Mb0656 (166 aa).

The protein belongs to the UPF0336 family.

In Mycobacterium bovis (strain ATCC BAA-935 / AF2122/97), this protein is UPF0336 protein Mb0656.